A 603-amino-acid polypeptide reads, in one-letter code: Complement factor I (603 aa).

An N-terminal signal peptide occupies residues 1 to 18 (MKLAHLSLFLLALHLSSS). 20 cysteine pairs are disulfide-bonded: Cys-36–Cys-260, Cys-46–Cys-57, Cys-51–Cys-62, Cys-64–Cys-96, Cys-70–Cys-89, Cys-78–Cys-109, Cys-144–Cys-186, Cys-157–Cys-219, Cys-191–Cys-201, Cys-234–Cys-252, Cys-246–Cys-261, Cys-264–Cys-276, Cys-271–Cys-289, Cys-283–Cys-298, Cys-348–Cys-473, Cys-386–Cys-402, Cys-394–Cys-464, Cys-487–Cys-551, Cys-515–Cys-530, and Cys-541–Cys-570. The Kazal-like domain occupies 58-111 (IEGTCICKLPYQCPRAGTPVCAMNGRSYPTYCHQKSFECLHPEIKFSHNGTCAA). N-linked (GlcNAc...) asparagine glycosylation is found at Asn-106, Asn-116, Asn-174, and Asn-182. In terms of domain architecture, SRCR spans 117-217 (VSLIYGRTKT…TELSNGLAGV (101 aa)). LDL-receptor class A domains follow at residues 218–262 (VCYK…LCCK) and 263–299 (GCRGNASLCKSGVCIPDQYKCNGEVDCITGEDESRCE). Ca(2+)-binding residues include Lys-244, Asn-247, Val-249, Asp-251, Asp-257, and Glu-258. N-linked (GlcNAc...) asparagine glycosylation occurs at Asn-267. Ca(2+)-binding residues include Tyr-281, Asn-284, Glu-286, Asp-288, Asp-294, and Glu-295. Residues 361–594 (VIGGKPANVG…YFDWISYHVG (234 aa)) form the Peptidase S1 domain. Active-site charge relay system residues include His-401 and Asp-449. N-linked (GlcNAc...) asparagine glycosylation is present at Asn-514. Catalysis depends on Ser-545, which acts as the Charge relay system. Asn-556 carries an N-linked (GlcNAc...) asparagine glycan.

The protein belongs to the peptidase S1 family. As to quaternary structure, heterodimer of a light and heavy chains; disulfide-linked. The fully processed and mature protein circulates as a zymogen, and is allosterically activated by substrate-induced remodeling of the active site. Interacts with C3b. Interacts with complement factor H. In terms of tissue distribution, expressed in the liver by hepatocytes. Also present in other cells such as monocytes, fibroblasts or keratinocytes.

Its subcellular location is the secreted. It localises to the extracellular space. It carries out the reaction Inactivates complement subcomponents C3b, iC3b and C4b by proteolytic cleavage.. Its function is as follows. Trypsin-like serine protease that plays an essential role in regulating the immune response by controlling all complement pathways. Inhibits these pathways by cleaving three peptide bonds in the alpha-chain of C3b and two bonds in the alpha-chain of C4b thereby inactivating these proteins. Essential cofactors for these reactions include factor H and C4BP in the fluid phase and membrane cofactor protein/CD46 and CR1 on cell surfaces. The presence of these cofactors on healthy cells allows degradation of deposited C3b by CFI in order to prevent undesired complement activation, while in apoptotic cells or microbes, the absence of such cofactors leads to C3b-mediated complement activation and subsequent opsonization. The polypeptide is Complement factor I (Cfi) (Mus musculus (Mouse)).